The chain runs to 156 residues: Small ribosomal subunit protein uS7 (156 aa).

The protein belongs to the universal ribosomal protein uS7 family. Part of the 30S ribosomal subunit. Contacts proteins S9 and S11.

One of the primary rRNA binding proteins, it binds directly to 16S rRNA where it nucleates assembly of the head domain of the 30S subunit. Is located at the subunit interface close to the decoding center, probably blocks exit of the E-site tRNA. This chain is Small ribosomal subunit protein uS7, found in Maridesulfovibrio salexigens (strain ATCC 14822 / DSM 2638 / NCIMB 8403 / VKM B-1763) (Desulfovibrio salexigens).